A 115-amino-acid polypeptide reads, in one-letter code: NTF2-related export protein 1 (115 aa).

Residues 7–115 (YAQEFVQRYY…LVLRSSTNFL (109 aa)) enclose the NTF2 domain.

Its subcellular location is the nucleus. Functionally, stimulator of protein export for NES-containing proteins. Also plays a role in mRNA nuclear export. The polypeptide is NTF2-related export protein 1 (nxt1) (Schizosaccharomyces pombe (strain 972 / ATCC 24843) (Fission yeast)).